The sequence spans 83 residues: Short neurotoxin 1 (83 aa).

A signal peptide spans 1–21 (MKTLLLTLVVVTIVCLDLGYT). 4 disulfide bridges follow: cysteine 24-cysteine 45, cysteine 38-cysteine 62, cysteine 64-cysteine 75, and cysteine 76-cysteine 81.

This sequence belongs to the three-finger toxin family. Short-chain subfamily. Type I alpha-neurotoxin sub-subfamily. In terms of tissue distribution, expressed by the venom gland.

The protein localises to the secreted. In terms of biological role, binds to muscle nicotinic acetylcholine receptor (nAChR) and inhibit acetylcholine from binding to the receptor, thereby impairing neuromuscular transmission. This is Short neurotoxin 1 from Pseudechis australis (Mulga snake).